Here is a 939-residue protein sequence, read N- to C-terminus: Vacuolar membrane protease (939 aa).

Over 1 to 11 (MGFNSIFKFRK) the chain is Cytoplasmic. Residues 12–32 (TSLSLLLFAVYFIIGILYFID) traverse the membrane as a helical segment. Over 33–356 (KTRYKHSLPI…TFVAIPSTKL (324 aa)) the chain is Vacuolar. Residues N59, N88, and N114 are each glycosylated (N-linked (GlcNAc...) asparagine). 2 residues coordinate Zn(2+): H149 and D161. Catalysis depends on E193, which acts as the Proton acceptor. Positions 194, 219, and 293 each coordinate Zn(2+). N-linked (GlcNAc...) asparagine glycosylation is present at N326. Residues 357 to 377 (FWINIALLIIMPIISIFLFSI) form a helical membrane-spanning segment. The Cytoplasmic segment spans residues 378–388 (VKKYNNEIIDS). The chain crosses the membrane as a helical span at residues 389–409 (GNIWWRLPISAMSSGTIIIFT). Residues 410-424 (TKLIMKWNPYILSRN) lie on the Vacuolar side of the membrane. A helical transmembrane segment spans residues 425-445 (FLLPLIGLTFEFIILNSYILT). Residues 446–453 (MFENLSSS) lie on the Cytoplasmic side of the membrane. Residues 454 to 474 (FDFKTIAINEISFLFWIVLAY) traverse the membrane as a helical segment. Over 475–491 (QTWKLYDNNYQNTGIYP) the chain is Vacuolar. The helical transmembrane segment at 492–512 (FTICYIVMATAGNIGYLFLIF) threads the bilayer. Residues 513–588 (KNIEIVEDEE…NQRTILKESK (76 aa)) are Cytoplasmic-facing. The segment covering 540 to 552 (YRDEINGRDDSSR) has biased composition (basic and acidic residues). The interval 540 to 561 (YRDEINGRDDSSRDSNSASIPT) is disordered. Residues 589 to 609 (LVYNYDWIIEFLLVVPFSTFL) traverse the membrane as a helical segment. The Vacuolar portion of the chain corresponds to 610-636 (LYNSLELIMDAVNQTIQETGDLYKVYK). A glycan (N-linked (GlcNAc...) asparagine) is linked at N622. A helical transmembrane segment spans residues 637–657 (ILAIGSILISIPTLPFAYKIG). Residues 658–663 (CQLGKT) lie on the Cytoplasmic side of the membrane. A helical membrane pass occupies residues 664-684 (LTFISIGCLLISMALAPFTEM). Topologically, residues 685 to 939 (NPIKFRFMQV…LVKLTEAMVL (255 aa)) are vacuolar. N-linked (GlcNAc...) asparagine glycosylation is found at N810 and N820.

The protein belongs to the peptidase M28 family. Zn(2+) is required as a cofactor.

Its subcellular location is the vacuole membrane. In terms of biological role, may be involved in vacuolar sorting and osmoregulation. In Vanderwaltozyma polyspora (strain ATCC 22028 / DSM 70294 / BCRC 21397 / CBS 2163 / NBRC 10782 / NRRL Y-8283 / UCD 57-17) (Kluyveromyces polysporus), this protein is Vacuolar membrane protease.